The primary structure comprises 250 residues: MGNLRVDVITLFPEMFSAITEYGITSRAVKQGLLQVTCWNPRDYTTDRHHTVDDRPFGGGPGMVMKIKPLEDALVSARQATGASAKVIYLSPQGRKLTQQAVKGLAEQESLILIAGRYEGIDERFIEAHVDEEWSIGDYVLSGGELPAMVLIDAVTRLLPGALGHVDSAEEDSFTDGLLDCPHYTRPEVYADQRVPDVLLSGNHAHIRRWRMKQSLGRTFERRADLLESRSLSGEEKKLLEEYLRERDDS.

S-adenosyl-L-methionine contacts are provided by residues glycine 116 and 136 to 141; that span reads IGDYVL.

This sequence belongs to the RNA methyltransferase TrmD family. Homodimer.

It localises to the cytoplasm. It catalyses the reaction guanosine(37) in tRNA + S-adenosyl-L-methionine = N(1)-methylguanosine(37) in tRNA + S-adenosyl-L-homocysteine + H(+). Specifically methylates guanosine-37 in various tRNAs. The protein is tRNA (guanine-N(1)-)-methyltransferase of Pseudomonas putida (strain W619).